The sequence spans 312 residues: 2,3-dihydroxyphenylpropionate/2,3-dihydroxicinnamic acid 1,2-dioxygenase (312 aa).

The active-site Proton donor is the His-115. The active-site Proton acceptor is the His-179.

The protein belongs to the LigB/MhpB extradiol dioxygenase family. Homotetramer. The cofactor is Fe(2+).

The catalysed reaction is 3-(2,3-dihydroxyphenyl)propanoate + O2 = (2Z,4E)-2-hydroxy-6-oxonona-2,4-dienedioate + H(+). It catalyses the reaction (2E)-3-(2,3-dihydroxyphenyl)prop-2-enoate + O2 = (2Z,4E,7E)-2-hydroxy-6-oxonona-2,4,7-trienedioate + H(+). It functions in the pathway aromatic compound metabolism; 3-phenylpropanoate degradation. Catalyzes the non-heme iron(II)-dependent oxidative cleavage of 2,3-dihydroxyphenylpropionic acid and 2,3-dihydroxicinnamic acid into 2-hydroxy-6-ketononadienedioate and 2-hydroxy-6-ketononatrienedioate, respectively. The polypeptide is 2,3-dihydroxyphenylpropionate/2,3-dihydroxicinnamic acid 1,2-dioxygenase (Mycolicibacterium paratuberculosis (strain ATCC BAA-968 / K-10) (Mycobacterium paratuberculosis)).